The primary structure comprises 421 residues: Phosphoribosylamine--glycine ligase (421 aa).

The region spanning 108 to 314 (KEIMVKYNVP…FAQNIDDIMM (207 aa)) is the ATP-grasp domain. 134–195 (IEEQGAPIVV…EEFLDGEEFS (62 aa)) is an ATP binding site. The Mg(2+) site is built by glutamate 284 and asparagine 286.

This sequence belongs to the GARS family. Mg(2+) serves as cofactor. Requires Mn(2+) as cofactor.

The enzyme catalyses 5-phospho-beta-D-ribosylamine + glycine + ATP = N(1)-(5-phospho-beta-D-ribosyl)glycinamide + ADP + phosphate + H(+). It functions in the pathway purine metabolism; IMP biosynthesis via de novo pathway; N(1)-(5-phospho-D-ribosyl)glycinamide from 5-phospho-alpha-D-ribose 1-diphosphate: step 2/2. The chain is Phosphoribosylamine--glycine ligase from Streptococcus pyogenes serotype M3 (strain SSI-1).